Consider the following 855-residue polypeptide: Envelope glycoprotein gp160 (855 aa).

An N-terminal signal peptide occupies residues 1–31; sequence MKVKGTRRNYQHLWRWGTLLLGMLMICSATE. The Extracellular segment spans residues 32–683; it reads KLWVTVYYGV…ITNWLWYIKI (652 aa). A disulfide bridge links C53 with C73. Residues N87, N129, N140, N154, N158, N184, N190, N200, N233, N244, N265, N279, N292, N298, N304, N334, N341, N358, and N364 are each glycosylated (N-linked (GlcNAc...) asparagine; by host). Cystine bridges form between C118/C208, C125/C199, C130/C155, C221/C250, and C231/C242. The V1 stretch occupies residues 130 to 154; sequence CTDLGKATNTNSSNWKEEIKGEIKN. Positions 155 to 199 are V2; sequence CSFNITTSIRDKIQKENALFRNLDVVPIDNASTTTNYTNYRLIHC. A V3 region spans residues 299-332; the sequence is CTRPNNNTRKSIYIGPGRAFHTTGRIIGDIRKAH. A disulfide bridge connects residues C299 and C333. Residues 366-376 are CD4-binding loop; the sequence is SSGGDPEIVMH. Cystine bridges form between C380–C442 and C387–C415. The V4 stretch occupies residues 387–415; the sequence is CNTTQLFNNTWRLNHTEGTKGNDTIILPC. 7 N-linked (GlcNAc...) asparagine; by host glycosylation sites follow: N388, N394, N400, N408, N445, N458, and N461. 2 V5 regions span residues 458–469 and 460–469; these read NVTNDTEVFRPG and TNDTEVFRPG. The interval 510–531 is fusion peptide; it reads AVGIVGAMFLGFLGAAGSTMGA. The segment at 573–591 is immunosuppression; the sequence is KQLQARVLAVERYLRDQQL. C597 and C603 are oxidised to a cystine. 4 N-linked (GlcNAc...) asparagine; by host glycosylation sites follow: N610, N615, N624, and N636. Residues 632–666 are a coiled coil; that stretch reads REIDNYTNTIYTLLEESQNQQEKNEQELLELDKWA. The interval 661–682 is MPER; binding to GalCer; it reads ELDKWASLWNWFSITNWLWYIK. The chain crosses the membrane as a helical span at residues 684–704; that stretch reads FIMIVGGLVGLRIVFAVLSIV. Topologically, residues 705–855 are cytoplasmic; it reads NRVRQGYSPL…IRQGLERLLL (151 aa). A YXXL motif; contains endocytosis signal motif is present at residues 711–714; that stretch reads YSPL. Residues 720 to 739 form a disordered region; that stretch reads LPVPRGPDRPDGIEEEGGER. C763 carries S-palmitoyl cysteine; by host lipidation. The Di-leucine internalization motif signature appears at 854–855; that stretch reads LL.

The protein belongs to the HIV-1 env protein family. In terms of assembly, the mature envelope protein (Env) consists of a homotrimer of non-covalently associated gp120-gp41 heterodimers. The resulting complex protrudes from the virus surface as a spike. There seems to be as few as 10 spikes on the average virion. Interacts with host CD4, CCR5 and CXCR4. Gp120 also interacts with the C-type lectins CD209/DC-SIGN and CLEC4M/DC-SIGNR (collectively referred to as DC-SIGN(R)). Gp120 and gp41 interact with GalCer. Gp120 interacts with host ITGA4/ITGB7 complex; on CD4+ T-cells, this interaction results in rapid activation of integrin ITGAL/LFA-1, which facilitates efficient cell-to-cell spreading of HIV-1. Gp120 interacts with cell-associated heparan sulfate; this interaction increases virus infectivity on permissive cells and may be involved in infection of CD4- cells. As to quaternary structure, the mature envelope protein (Env) consists of a homotrimer of non-covalently associated gp120-gp41 heterodimers. The resulting complex protrudes from the virus surface as a spike. There seems to be as few as 10 spikes on the average virion. Post-translationally, highly glycosylated by host. The high number of glycan on the protein is reffered to as 'glycan shield' because it contributes to hide protein sequence from adaptive immune system. In terms of processing, palmitoylation of the transmembrane protein and of Env polyprotein (prior to its proteolytic cleavage) is essential for their association with host cell membrane lipid rafts. Palmitoylation is therefore required for envelope trafficking to classical lipid rafts, but not for viral replication. Specific enzymatic cleavages in vivo yield mature proteins. Envelope glycoproteins are synthesized as an inactive precursor that is heavily N-glycosylated and processed likely by host cell furin in the Golgi to yield the mature SU and TM proteins. The cleavage site between SU and TM requires the minimal sequence [KR]-X-[KR]-R. About 2 of the 9 disulfide bonds of gp41 are reduced by P4HB/PDI, following binding to CD4 receptor.

It is found in the virion membrane. The protein resides in the host cell membrane. It localises to the host endosome membrane. In terms of biological role, oligomerizes in the host endoplasmic reticulum into predominantly trimers. In a second time, gp160 transits in the host Golgi, where glycosylation is completed. The precursor is then proteolytically cleaved in the trans-Golgi and thereby activated by cellular furin or furin-like proteases to produce gp120 and gp41. Functionally, attaches the virus to the host lymphoid cell by binding to the primary receptor CD4. This interaction induces a structural rearrangement creating a high affinity binding site for a chemokine coreceptor like CXCR4 and/or CCR5. Acts as a ligand for CD209/DC-SIGN and CLEC4M/DC-SIGNR, which are respectively found on dendritic cells (DCs), and on endothelial cells of liver sinusoids and lymph node sinuses. These interactions allow capture of viral particles at mucosal surfaces by these cells and subsequent transmission to permissive cells. HIV subverts the migration properties of dendritic cells to gain access to CD4+ T-cells in lymph nodes. Virus transmission to permissive T-cells occurs either in trans (without DCs infection, through viral capture and transmission), or in cis (following DCs productive infection, through the usual CD4-gp120 interaction), thereby inducing a robust infection. In trans infection, bound virions remain infectious over days and it is proposed that they are not degraded, but protected in non-lysosomal acidic organelles within the DCs close to the cell membrane thus contributing to the viral infectious potential during DCs' migration from the periphery to the lymphoid tissues. On arrival at lymphoid tissues, intact virions recycle back to DCs' cell surface allowing virus transmission to CD4+ T-cells. Its function is as follows. Acts as a class I viral fusion protein. Under the current model, the protein has at least 3 conformational states: pre-fusion native state, pre-hairpin intermediate state, and post-fusion hairpin state. During fusion of viral and target intracellular membranes, the coiled coil regions (heptad repeats) assume a trimer-of-hairpins structure, positioning the fusion peptide in close proximity to the C-terminal region of the ectodomain. The formation of this structure appears to drive apposition and subsequent fusion of viral and target cell membranes. Complete fusion occurs in host cell endosomes and is dynamin-dependent, however some lipid transfer might occur at the plasma membrane. The virus undergoes clathrin-dependent internalization long before endosomal fusion, thus minimizing the surface exposure of conserved viral epitopes during fusion and reducing the efficacy of inhibitors targeting these epitopes. Membranes fusion leads to delivery of the nucleocapsid into the cytoplasm. The polypeptide is Envelope glycoprotein gp160 (Homo sapiens (Human)).